A 144-amino-acid chain; its full sequence is Acylphosphatase-like protein MJ1331 (144 aa).

Residues 8-100 (TYELRIYGNV…FPNGLNKIST (93 aa)) form the Acylphosphatase-like domain.

This is Acylphosphatase-like protein MJ1331 from Methanocaldococcus jannaschii (strain ATCC 43067 / DSM 2661 / JAL-1 / JCM 10045 / NBRC 100440) (Methanococcus jannaschii).